The primary structure comprises 309 residues: MAGNSRRRGAVRKAGTKKGPTVGSGGQRRRGLEGRGPTPPAHLRPNHPAAKRAQSPPRRPAKRTEETETVLGRNPVLECLRAGVPATALYVALGTEADERLTESVSRAADSGISILEVPRADLDRMTGNHLHQGIALQVPPYIYAHPDDLLEAAAGSLPALLVALDNISDPRNLGAIVRSVAAFGGHGVLIPQRRSASVTAVAWRTSAGAAARIPVARATNLTRTLQDWADRGLRVIGLDAGGDTMLDDLDGSDPLVVVVGSEGKGLSRLVRQNCDEVVSIPMAGSAESLNASVAAGVVLAEISRQRRG.

The span at 1–16 (MAGNSRRRGAVRKAGT) shows a compositional bias: basic residues. Residues 1–70 (MAGNSRRRGA…AKRTEETETV (70 aa)) form a disordered region. G261, I281, and L290 together coordinate S-adenosyl-L-methionine.

This sequence belongs to the class IV-like SAM-binding methyltransferase superfamily. RNA methyltransferase TrmH family.

This is an uncharacterized protein from Mycolicibacterium paratuberculosis (strain ATCC BAA-968 / K-10) (Mycobacterium paratuberculosis).